Reading from the N-terminus, the 132-residue chain is UPF0299 membrane protein YohJ (132 aa).

4 consecutive transmembrane segments (helical) span residues 5–25, 26–46, 63–83, and 93–113; these read LNIIWQYLRAFVLIYACLYAG, IFIASLLPVTIPGSIIGMLIL, GCYVLIRYMALLFVPIGVGVM, and FGPVVVSCAVSTLVVFLVVSW.

Belongs to the UPF0299 family.

The protein localises to the cell inner membrane. The chain is UPF0299 membrane protein YohJ from Shigella flexneri serotype 5b (strain 8401).